The chain runs to 369 residues: Porphobilinogen deaminase, chloroplastic (369 aa).

The N-terminal 46 residues, 1–46, are a transit peptide targeting the chloroplast; that stretch reads MEMTLYSSSSFSLPSAPSNPSLSLFTSSFRFSSFKTSPFSKCRIRA. Cysteine 303 is subject to S-(dipyrrolylmethanemethyl)cysteine.

The protein belongs to the HMBS family. The cofactor is dipyrromethane.

It is found in the plastid. Its subcellular location is the chloroplast. The catalysed reaction is 4 porphobilinogen + H2O = hydroxymethylbilane + 4 NH4(+). It functions in the pathway porphyrin-containing compound metabolism; protoporphyrin-IX biosynthesis; coproporphyrinogen-III from 5-aminolevulinate: step 2/4. Its pathway is porphyrin-containing compound metabolism; chlorophyll biosynthesis. Functionally, tetrapolymerization of the monopyrrole PBG into the hydroxymethylbilane pre-uroporphyrinogen in several discrete steps. This Pisum sativum (Garden pea) protein is Porphobilinogen deaminase, chloroplastic (HEMC).